The sequence spans 268 residues: Mediator of RNA polymerase II transcription subunit 18 (268 aa).

The disordered stretch occupies residues 91-112; it reads APASPVADQDAHMSGTDEKSSV. Positions 99 to 112 are enriched in basic and acidic residues; it reads QDAHMSGTDEKSSV.

The protein belongs to the Mediator complex subunit 18 family. In terms of assembly, component of the Mediator complex.

Its subcellular location is the nucleus. In terms of biological role, component of the Mediator complex, a coactivator involved in the regulated transcription of nearly all RNA polymerase II-dependent genes. Mediator functions as a bridge to convey information from gene-specific regulatory proteins to the basal RNA polymerase II transcription machinery. Mediator is recruited to promoters by direct interactions with regulatory proteins and serves as a scaffold for the assembly of a functional preinitiation complex with RNA polymerase II and the general transcription factors. This Aspergillus fumigatus (strain ATCC MYA-4609 / CBS 101355 / FGSC A1100 / Af293) (Neosartorya fumigata) protein is Mediator of RNA polymerase II transcription subunit 18 (srb5).